The chain runs to 443 residues: Tol-Pal system protein TolB (443 aa).

The first 33 residues, Met1–Ala33, serve as a signal peptide directing secretion.

Belongs to the TolB family. As to quaternary structure, the Tol-Pal system is composed of five core proteins: the inner membrane proteins TolA, TolQ and TolR, the periplasmic protein TolB and the outer membrane protein Pal. They form a network linking the inner and outer membranes and the peptidoglycan layer.

It is found in the periplasm. Its function is as follows. Part of the Tol-Pal system, which plays a role in outer membrane invagination during cell division and is important for maintaining outer membrane integrity. The chain is Tol-Pal system protein TolB from Brucella canis (strain ATCC 23365 / NCTC 10854 / RM-666).